The sequence spans 181 residues: Probable pyruvoyl-dependent arginine decarboxylase (181 aa).

S43 carries the post-translational modification Pyruvic acid (Ser).

The protein belongs to the PdaD family. Requires pyruvate as cofactor.

It catalyses the reaction L-arginine + H(+) = agmatine + CO2. This Chlorobium phaeovibrioides (strain DSM 265 / 1930) (Prosthecochloris vibrioformis (strain DSM 265)) protein is Probable pyruvoyl-dependent arginine decarboxylase.